Here is a 411-residue protein sequence, read N- to C-terminus: Translation initiation factor 2 subunit gamma (411 aa).

The tr-type G domain occupies 9 to 203 (QAEVNIGMVG…AIEEFIPTPK (195 aa)). Residues 18–25 (GHVDHGKT) are G1. Mg(2+) contacts are provided by Asp21, Thr25, Gly46, and Thr48. 21–26 (DHGKTT) is a binding site for GTP. The G2 stretch occupies residues 46-50 (GITIK). Zn(2+) contacts are provided by Cys61, Cys64, Cys73, and Cys76. Positions 90–93 (DSPG) are G3. GTP is bound by residues 146-149 (NKIE) and 181-183 (SAL). Positions 146-149 (NKIE) are G4. Positions 181–183 (SAL) are G5.

This sequence belongs to the TRAFAC class translation factor GTPase superfamily. Classic translation factor GTPase family. EIF2G subfamily. In terms of assembly, heterotrimer composed of an alpha, a beta and a gamma chain. The cofactor is Mg(2+).

The enzyme catalyses GTP + H2O = GDP + phosphate + H(+). In terms of biological role, eIF-2 functions in the early steps of protein synthesis by forming a ternary complex with GTP and initiator tRNA. In Pyrococcus furiosus (strain ATCC 43587 / DSM 3638 / JCM 8422 / Vc1), this protein is Translation initiation factor 2 subunit gamma.